The primary structure comprises 202 residues: MYVGRFVVVSPEVGAYRVSSRSFPNRQAVQRDGTVTVEPTPDAPETDNPYISYNGVRVTERGAVVGNGSHVDPIAEKLELGYPARDAIAEPLLSLDFEKDDYDTPRVAGIVGVDAADPTTNADGPGAVIGTVRRDALLVEEVTEPTLVATYEENSPTAFDLAATDASDVAREVYDHEYEHAVCSAGVAGSAGEFDVAVYNGE.

The segment at 29 to 52 (VQRDGTVTVEPTPDAPETDNPYIS) is disordered.

It belongs to the archaeal IMP cyclohydrolase family.

It carries out the reaction IMP + H2O = 5-formamido-1-(5-phospho-D-ribosyl)imidazole-4-carboxamide. It functions in the pathway purine metabolism; IMP biosynthesis via de novo pathway; IMP from 5-formamido-1-(5-phospho-D-ribosyl)imidazole-4-carboxamide: step 1/1. Functionally, catalyzes the cyclization of 5-formylamidoimidazole-4-carboxamide ribonucleotide to IMP. The protein is IMP cyclohydrolase of Haloarcula marismortui (strain ATCC 43049 / DSM 3752 / JCM 8966 / VKM B-1809) (Halobacterium marismortui).